The following is a 405-amino-acid chain: Cytoplasmic 60S subunit biogenesis factor ZNF622 (405 aa).

2 U1-type zinc fingers span residues 4–28 and 67–91; these read YTCI…TDWH and TYCT…SKKH. A disordered region spans residues 135–230; the sequence is AIRAQPSSSP…GVEEEEEKQA (96 aa). Residues 194-228 are compositionally biased toward acidic residues; sequence AEEEEDSEEGWEEMDSDEDLGSEEEMEGVEEEEEK.

The protein belongs to the REI1 family. As to quaternary structure, homo- and heterodimer. Associates with pre-60S ribosomal particles. As to expression, mainly expressed in the ovary. Mainly expressed in the testis.

Its subcellular location is the cytoplasm. It is found in the nucleus. Pre-60S-associated cytoplasmic factor involved in the cytoplasmic maturation of the 60S subunit. This Gallus gallus (Chicken) protein is Cytoplasmic 60S subunit biogenesis factor ZNF622 (ZNF622).